A 131-amino-acid polypeptide reads, in one-letter code: RxLR effector protein 62 (131 aa).

Residues 1-19 (MRLDILLFTLSSSTSLALS) form the signal peptide. Positions 49 to 60 (RHLREEPANEAR) match the RxLR-dEER motif. Asn61 carries an N-linked (GlcNAc...) asparagine glycan.

It belongs to the RxLR effector family.

The protein resides in the secreted. It localises to the host cell. Its function is as follows. Secreted effector that suppresses callose deposition, a hallmark of pathogen-associated molecular pattern (PAMP)-triggered immunity (PTI) and renders host plants more susceptible to bacterial infection. Reduces host plant responsiveness to salicylic acid (SA) in haustoriated cells into which host-translocated effectors are delivered. The chain is RxLR effector protein 62 from Hyaloperonospora arabidopsidis (strain Emoy2) (Downy mildew agent).